We begin with the raw amino-acid sequence, 452 residues long: Bifunctional protein GlmU (452 aa).

The pyrophosphorylase stretch occupies residues 1–230 (MSRSRSAIIL…ADEVLGVNSR (230 aa)). UDP-N-acetyl-alpha-D-glucosamine-binding positions include 10–13 (LAAG), lysine 24, glutamine 75, and 80–81 (GT). Position 105 (aspartate 105) interacts with Mg(2+). Residues glycine 141, glutamate 156, asparagine 171, and asparagine 228 each coordinate UDP-N-acetyl-alpha-D-glucosamine. Residue asparagine 228 coordinates Mg(2+). The linker stretch occupies residues 231-251 (ADLAEAEAAFQSRMRQSMMAD). The segment at 252-452 (GVTLIAPETV…ARKARKDSQT (201 aa)) is N-acetyltransferase. Residues arginine 317 and lysine 335 each coordinate UDP-N-acetyl-alpha-D-glucosamine. Histidine 347 (proton acceptor) is an active-site residue. Residues tyrosine 350 and asparagine 361 each contribute to the UDP-N-acetyl-alpha-D-glucosamine site. Residues alanine 364, 370–371 (NY), serine 389, threonine 407, and arginine 424 contribute to the acetyl-CoA site.

It in the N-terminal section; belongs to the N-acetylglucosamine-1-phosphate uridyltransferase family. The protein in the C-terminal section; belongs to the transferase hexapeptide repeat family. Homotrimer. Mg(2+) is required as a cofactor.

The protein resides in the cytoplasm. It carries out the reaction alpha-D-glucosamine 1-phosphate + acetyl-CoA = N-acetyl-alpha-D-glucosamine 1-phosphate + CoA + H(+). It catalyses the reaction N-acetyl-alpha-D-glucosamine 1-phosphate + UTP + H(+) = UDP-N-acetyl-alpha-D-glucosamine + diphosphate. It functions in the pathway nucleotide-sugar biosynthesis; UDP-N-acetyl-alpha-D-glucosamine biosynthesis; N-acetyl-alpha-D-glucosamine 1-phosphate from alpha-D-glucosamine 6-phosphate (route II): step 2/2. It participates in nucleotide-sugar biosynthesis; UDP-N-acetyl-alpha-D-glucosamine biosynthesis; UDP-N-acetyl-alpha-D-glucosamine from N-acetyl-alpha-D-glucosamine 1-phosphate: step 1/1. The protein operates within bacterial outer membrane biogenesis; LPS lipid A biosynthesis. In terms of biological role, catalyzes the last two sequential reactions in the de novo biosynthetic pathway for UDP-N-acetylglucosamine (UDP-GlcNAc). The C-terminal domain catalyzes the transfer of acetyl group from acetyl coenzyme A to glucosamine-1-phosphate (GlcN-1-P) to produce N-acetylglucosamine-1-phosphate (GlcNAc-1-P), which is converted into UDP-GlcNAc by the transfer of uridine 5-monophosphate (from uridine 5-triphosphate), a reaction catalyzed by the N-terminal domain. This Maricaulis maris (strain MCS10) (Caulobacter maris) protein is Bifunctional protein GlmU.